The following is a 453-amino-acid chain: Dihydrolipoyllysine-residue succinyltransferase component of 2-oxoglutarate dehydrogenase complex, mitochondrial (453 aa).

Residues 1-67 (MLSRSRCVSR…RFFRTTAVCK (67 aa)) constitute a mitochondrion transit peptide. Residues 70–144 (LVTVKTPAFA…EGGTPLFTLR (75 aa)) enclose the Lipoyl-binding domain. The residue at position 81 (Ser81) is a Phosphoserine. N6-lipoyllysine is present on Lys110. A compositionally biased stretch (low complexity) spans 152–172 (KAKPAEAPAAAAPKAEPTAAA). The interval 152-225 (KAKPAEAPAA…GKGLRSEHRE (74 aa)) is disordered. Lys154 carries the post-translational modification N6-acetyllysine. Residues 173–196 (VPPPAAPIPTQMPPVPSPSQPPSG) are compositionally biased toward pro residues. Residues Lys267, Lys272, Lys273, Lys277, and Lys307 each carry the N6-acetyllysine modification. Catalysis depends on residues His424 and Asp428.

It belongs to the 2-oxoacid dehydrogenase family. In terms of assembly, the 2-oxoglutarate dehydrogenase complex is composed of OGDH (2-oxoglutarate dehydrogenase; E1), DLST (dihydrolipoamide succinyltransferase; E2), DLD (dihydrolipoamide dehydrogenase; E3) and the assembly factor KGD4. It contains multiple copies of the three enzymatic components (E1, E2 and E3). In the nucleus, the 2-oxoglutarate dehydrogenase complex associates with KAT2A. Interacts with ABHD11; this interaction maintains the functional lipoylation of the 2-oxoglutarate dehydrogenase complex. (R)-lipoate serves as cofactor.

Its subcellular location is the mitochondrion matrix. The protein localises to the nucleus. The enzyme catalyses N(6)-[(R)-dihydrolipoyl]-L-lysyl-[protein] + succinyl-CoA = N(6)-[(R)-S(8)-succinyldihydrolipoyl]-L-lysyl-[protein] + CoA. Its pathway is amino-acid degradation; L-lysine degradation via saccharopine pathway; glutaryl-CoA from L-lysine: step 6/6. It participates in carbohydrate metabolism; tricarboxylic acid cycle. In terms of biological role, dihydrolipoamide succinyltransferase (E2) component of the 2-oxoglutarate dehydrogenase complex. The 2-oxoglutarate dehydrogenase complex catalyzes the overall conversion of 2-oxoglutarate to succinyl-CoA and CO(2). The 2-oxoglutarate dehydrogenase complex is mainly active in the mitochondrion. A fraction of the 2-oxoglutarate dehydrogenase complex also localizes in the nucleus and is required for lysine succinylation of histones: associates with KAT2A on chromatin and provides succinyl-CoA to histone succinyltransferase KAT2A. The polypeptide is Dihydrolipoyllysine-residue succinyltransferase component of 2-oxoglutarate dehydrogenase complex, mitochondrial (Homo sapiens (Human)).